The following is a 217-amino-acid chain: Probable GTP-binding protein EngB (217 aa).

The EngB-type G domain maps to 33–217 (GPAEIAFAGR…RITIEQAVAR (185 aa)). Residues 41-48 (GRSNVGKS), 68-72 (GRTQE), 95-98 (DMPG), 162-165 (TKTD), and 196-198 (TSS) contribute to the GTP site. The Mg(2+) site is built by Ser48 and Thr70.

Belongs to the TRAFAC class TrmE-Era-EngA-EngB-Septin-like GTPase superfamily. EngB GTPase family. The cofactor is Mg(2+).

In terms of biological role, necessary for normal cell division and for the maintenance of normal septation. This Sinorhizobium fredii (strain NBRC 101917 / NGR234) protein is Probable GTP-binding protein EngB.